We begin with the raw amino-acid sequence, 114 residues long: Iron-sulfur cluster insertion protein ErpA (114 aa).

Residues cysteine 42, cysteine 106, and cysteine 108 each contribute to the iron-sulfur cluster site.

Belongs to the HesB/IscA family. In terms of assembly, homodimer. Iron-sulfur cluster serves as cofactor.

Its function is as follows. Required for insertion of 4Fe-4S clusters for at least IspG. This is Iron-sulfur cluster insertion protein ErpA from Klebsiella pneumoniae (strain 342).